The chain runs to 89 residues: Small ribosomal subunit protein uS15 (89 aa).

This sequence belongs to the universal ribosomal protein uS15 family. In terms of assembly, part of the 30S ribosomal subunit. Forms a bridge to the 50S subunit in the 70S ribosome, contacting the 23S rRNA.

One of the primary rRNA binding proteins, it binds directly to 16S rRNA where it helps nucleate assembly of the platform of the 30S subunit by binding and bridging several RNA helices of the 16S rRNA. Functionally, forms an intersubunit bridge (bridge B4) with the 23S rRNA of the 50S subunit in the ribosome. This chain is Small ribosomal subunit protein uS15, found in Pseudomonas putida (Arthrobacter siderocapsulatus).